The sequence spans 730 residues: Patatin-like phospholipase domain-containing protein CIMG_04897 (730 aa).

Residues 1-11 are compositionally biased toward basic residues; sequence MTANSSRRRLQ. The disordered stretch occupies residues 1–26; the sequence is MTANSSRRRLQMKSPRTDGDEKEEDY. A helical membrane pass occupies residues 97–117; that stretch reads WPFLLFVLSWIVFLGALYILT. The region spanning 281–472 is the PNPLA domain; it reads LCLSGGATLA…RTDIPLKALD (192 aa). Residues 312–316 carry the GXSXG motif; sequence GTSGG. Ser-314 functions as the Nucleophile in the catalytic mechanism. Residue Asp-459 is the Proton acceptor of the active site. The tract at residues 667–730 is disordered; that stretch reads GHFREAPTSH…QGQSSGTKIG (64 aa). A compositionally biased stretch (polar residues) spans 721 to 730; that stretch reads QGQSSGTKIG.

The protein belongs to the PLPL family.

It is found in the membrane. Probable lipid hydrolase. The polypeptide is Patatin-like phospholipase domain-containing protein CIMG_04897 (Coccidioides immitis (strain RS) (Valley fever fungus)).